Here is a 478-residue protein sequence, read N- to C-terminus: Protein FAM83E (478 aa).

Positions 1-293 (MAASQLAALE…LYAASCPLPP (293 aa)) are DUF1669. Disordered regions lie at residues 292 to 334 (PPAP…PLAH), 359 to 436 (RART…LPPA), and 452 to 478 (DATFKLQEPRGVRPSDWAPRAGLGGQP). A compositionally biased stretch (basic residues) spans 309–319 (RSPHRVSRRRS). A compositionally biased stretch (polar residues) spans 379–388 (RLSQLSGSSD).

Belongs to the FAM83 family. As to quaternary structure, directly interacts (via DUF1669) with CSNK1A1, CSNK1A1L, CSNK1D and CSNK1E. May interact with RAF1.

The protein localises to the cytoplasm. The protein resides in the perinuclear region. Functionally, may play a role in MAPK signaling. This Homo sapiens (Human) protein is Protein FAM83E.